The sequence spans 376 residues: RCC1 domain-containing protein 1 (376 aa).

Residues 1 to 169 (MAEERPGAWF…ARQLELGAEH (169 aa)) are interaction with KDM8. An RCC1 1 repeat occupies 6-56 (PGAWFGFGFCGFGQELGSGRGRQVHSPSPLRAGVDICRVSASWSYTAFVTR). Residue R141 is modified to (3R)-3-hydroxyarginine. RCC1 repeat units lie at residues 176–227 (AGQV…CVSE), 229–317 (GDIY…VVTR), and 318–371 (TGEL…VYAV).

As to quaternary structure, found in a complex with KDM8. Interacts (via N-terminus) with KDM8 (via N-terminus). Post-translationally, specifically hydroxylated (with R stereochemistry) at C-3 of ARG-141 by KDM8.

The protein resides in the chromosome. Functionally, plays a role in transcriptional repression of satellite repeats, possibly by regulating H3K36 methylation levels in centromeric regions together with KDM8. Possibly together with KDM8, is involved in proper mitotic spindle organization and chromosome segregation. Plays a role in regulating alpha-tubulin deacetylation and cytoskeletal microtubule stability, thereby promoting cell migration and TGF-beta-induced epithelial to mesenchymal transition (EMT), potentially through the inhibition of KDM8. The polypeptide is RCC1 domain-containing protein 1 (Homo sapiens (Human)).